The sequence spans 245 residues: 3-deoxy-manno-octulosonate cytidylyltransferase (245 aa).

The protein belongs to the KdsB family.

It localises to the cytoplasm. The catalysed reaction is 3-deoxy-alpha-D-manno-oct-2-ulosonate + CTP = CMP-3-deoxy-beta-D-manno-octulosonate + diphosphate. It participates in nucleotide-sugar biosynthesis; CMP-3-deoxy-D-manno-octulosonate biosynthesis; CMP-3-deoxy-D-manno-octulosonate from 3-deoxy-D-manno-octulosonate and CTP: step 1/1. The protein operates within bacterial outer membrane biogenesis; lipopolysaccharide biosynthesis. Activates KDO (a required 8-carbon sugar) for incorporation into bacterial lipopolysaccharide in Gram-negative bacteria. In Elusimicrobium minutum (strain Pei191), this protein is 3-deoxy-manno-octulosonate cytidylyltransferase.